The chain runs to 118 residues: Ribosome-binding factor A (118 aa).

It belongs to the RbfA family. In terms of assembly, monomer. Binds 30S ribosomal subunits, but not 50S ribosomal subunits or 70S ribosomes.

It is found in the cytoplasm. Functionally, one of several proteins that assist in the late maturation steps of the functional core of the 30S ribosomal subunit. Associates with free 30S ribosomal subunits (but not with 30S subunits that are part of 70S ribosomes or polysomes). Required for efficient processing of 16S rRNA. May interact with the 5'-terminal helix region of 16S rRNA. The protein is Ribosome-binding factor A of Bacillus cereus (strain AH820).